Reading from the N-terminus, the 921-residue chain is Isoleucine--tRNA ligase (921 aa).

Residues 57-67 carry the 'HIGH' region motif; it reads PYANGDIHMGH. Glu-552 lines the L-isoleucyl-5'-AMP pocket. The 'KMSKS' region motif lies at 593 to 597; sequence KMSKS. An ATP-binding site is contributed by Lys-596. Positions 888, 891, 908, and 911 each coordinate Zn(2+).

It belongs to the class-I aminoacyl-tRNA synthetase family. IleS type 1 subfamily. Monomer. Zn(2+) is required as a cofactor.

The protein resides in the cytoplasm. The enzyme catalyses tRNA(Ile) + L-isoleucine + ATP = L-isoleucyl-tRNA(Ile) + AMP + diphosphate. Functionally, catalyzes the attachment of isoleucine to tRNA(Ile). As IleRS can inadvertently accommodate and process structurally similar amino acids such as valine, to avoid such errors it has two additional distinct tRNA(Ile)-dependent editing activities. One activity is designated as 'pretransfer' editing and involves the hydrolysis of activated Val-AMP. The other activity is designated 'posttransfer' editing and involves deacylation of mischarged Val-tRNA(Ile). The chain is Isoleucine--tRNA ligase from Bacillus anthracis (strain A0248).